The chain runs to 448 residues: Exodeoxyribonuclease 7 large subunit (448 aa).

It belongs to the XseA family. Heterooligomer composed of large and small subunits.

The protein localises to the cytoplasm. It catalyses the reaction Exonucleolytic cleavage in either 5'- to 3'- or 3'- to 5'-direction to yield nucleoside 5'-phosphates.. Bidirectionally degrades single-stranded DNA into large acid-insoluble oligonucleotides, which are then degraded further into small acid-soluble oligonucleotides. The sequence is that of Exodeoxyribonuclease 7 large subunit from Nitrosomonas eutropha (strain DSM 101675 / C91 / Nm57).